Consider the following 344-residue polypeptide: Phosphate acyltransferase (344 aa).

This sequence belongs to the PlsX family. As to quaternary structure, homodimer. Probably interacts with PlsY.

Its subcellular location is the cytoplasm. It carries out the reaction a fatty acyl-[ACP] + phosphate = an acyl phosphate + holo-[ACP]. Its pathway is lipid metabolism; phospholipid metabolism. Its function is as follows. Catalyzes the reversible formation of acyl-phosphate (acyl-PO(4)) from acyl-[acyl-carrier-protein] (acyl-ACP). This enzyme utilizes acyl-ACP as fatty acyl donor, but not acyl-CoA. The sequence is that of Phosphate acyltransferase from Paracidovorax citrulli (strain AAC00-1) (Acidovorax citrulli).